The primary structure comprises 362 residues: 4-hydroxy-3-methylbut-2-en-1-yl diphosphate synthase (flavodoxin) (362 aa).

[4Fe-4S] cluster contacts are provided by C266, C269, C301, and E308.

The protein belongs to the IspG family. [4Fe-4S] cluster serves as cofactor.

It catalyses the reaction (2E)-4-hydroxy-3-methylbut-2-enyl diphosphate + oxidized [flavodoxin] + H2O + 2 H(+) = 2-C-methyl-D-erythritol 2,4-cyclic diphosphate + reduced [flavodoxin]. It participates in isoprenoid biosynthesis; isopentenyl diphosphate biosynthesis via DXP pathway; isopentenyl diphosphate from 1-deoxy-D-xylulose 5-phosphate: step 5/6. Functionally, converts 2C-methyl-D-erythritol 2,4-cyclodiphosphate (ME-2,4cPP) into 1-hydroxy-2-methyl-2-(E)-butenyl 4-diphosphate. This chain is 4-hydroxy-3-methylbut-2-en-1-yl diphosphate synthase (flavodoxin), found in Malacoplasma penetrans (strain HF-2) (Mycoplasma penetrans).